The chain runs to 409 residues: ATPase ASNA1 homolog (409 aa).

21–28 (KGGVGKTT) provides a ligand contact to ATP. Asp-62 is an active-site residue. ATP contacts are provided by Glu-303 and Asn-330. Zn(2+)-binding residues include Cys-342 and Cys-345.

Belongs to the arsA ATPase family. In terms of assembly, homodimer.

It is found in the cytoplasm. The protein localises to the endoplasmic reticulum. In terms of biological role, ATPase required for the post-translational delivery of tail-anchored (TA) proteins to the endoplasmic reticulum. Recognizes and selectively binds the transmembrane domain of TA proteins in the cytosol. This complex then targets to the endoplasmic reticulum by membrane-bound receptors, where the tail-anchored protein is released for insertion. This process is regulated by ATP binding and hydrolysis. ATP binding drives the homodimer towards the closed dimer state, facilitating recognition of newly synthesized TA membrane proteins. ATP hydrolysis is required for insertion. Subsequently, the homodimer reverts towards the open dimer state, lowering its affinity for the membrane-bound receptor, and returning it to the cytosol to initiate a new round of targeting. The polypeptide is ATPase ASNA1 homolog (Leishmania infantum).